A 409-amino-acid polypeptide reads, in one-letter code: Serine/threonine transporter SstT (409 aa).

9 helical membrane-spanning segments follow: residues 24-44 (LALG…AGLF), 48-68 (FVGA…AATI), 82-102 (IIVL…IAGM), 142-162 (AIAN…GAAL), 194-214 (LGIF…ALAG), 218-238 (LLAV…PAIV), 292-312 (IPLG…VLAM), 319-339 (GIQV…VSAC), and 365-385 (VAMQ…SAET).

This sequence belongs to the dicarboxylate/amino acid:cation symporter (DAACS) (TC 2.A.23) family.

Its subcellular location is the cell inner membrane. The catalysed reaction is L-serine(in) + Na(+)(in) = L-serine(out) + Na(+)(out). The enzyme catalyses L-threonine(in) + Na(+)(in) = L-threonine(out) + Na(+)(out). In terms of biological role, involved in the import of serine and threonine into the cell, with the concomitant import of sodium (symport system). This is Serine/threonine transporter SstT from Neisseria gonorrhoeae (strain NCCP11945).